A 180-amino-acid chain; its full sequence is Large ribosomal subunit protein uL10 (180 aa).

The protein belongs to the universal ribosomal protein uL10 family. Part of the ribosomal stalk of the 50S ribosomal subunit. The N-terminus interacts with L11 and the large rRNA to form the base of the stalk. The C-terminus forms an elongated spine to which L12 dimers bind in a sequential fashion forming a multimeric L10(L12)X complex.

In terms of biological role, forms part of the ribosomal stalk, playing a central role in the interaction of the ribosome with GTP-bound translation factors. The polypeptide is Large ribosomal subunit protein uL10 (Thermosipho melanesiensis (strain DSM 12029 / CIP 104789 / BI429)).